The sequence spans 1545 residues: Tricalbin-3 (1545 aa).

The interval 1–89 is disordered; it reads MTGIKAQVHP…SNPEGKKQSS (89 aa). Residues 1–206 are Cytoplasmic-facing; that stretch reads MTGIKAQVHP…AYILENFYND (206 aa). The segment covering 62–80 has biased composition (polar residues); sequence TKTSNSVSDVSKGQKTADS. Residues serine 67 and serine 112 each carry the phosphoserine modification. A helical transmembrane segment spans residues 207-227; it reads WYCNIATVLGTCFFSWLFAYI. Position 228 (glycine 228) is a topological domain, extracellular. The helical transmembrane segment at 229–249 threads the bilayer; that stretch reads FSWWSMIFIFLGTATVYNAEY. At 250-1545 the chain is on the cytoplasmic side; it reads TRFNRNIRDD…VPEVPQEYTQ (1296 aa). The 208-residue stretch at 272-479 folds into the SMP-LTD domain; it reads RVESTTWLNS…PPNHLDINVE (208 aa). One can recognise a C2 1 domain in the interval 470 to 596; the sequence is PPNHLDINVE…LQNPVLDNQT (127 aa). Residues 620 to 660 are a coiled coil; the sequence is EDKSEEKAVERAEAKAKGKKEDENEDTTEKEEDENEESSQT. Residues 624 to 641 show a composition bias toward basic and acidic residues; sequence EEKAVERAEAKAKGKKED. The segment at 624 to 660 is disordered; sequence EEKAVERAEAKAKGKKEDENEDTTEKEEDENEESSQT. A compositionally biased stretch (acidic residues) spans 642–658; sequence ENEDTTEKEEDENEESS. C2 domains lie at 646–763 and 783–897; these read TTEK…AQEF and MTGA…SGKY. Positions 937 to 972 form a coiled coil; sequence SPEELVNVEKLEKELKEKKKKFEATQEENEQEMEKN. Residues 1119-1234 enclose the C2 4 domain; it reads PTSVKLPSSE…EVGKTYNWNL (116 aa). Aspartate 1150, aspartate 1156, aspartate 1204, aspartate 1206, and aspartate 1212 together coordinate Ca(2+). Residues 1304 to 1404 form a disordered region; the sequence is LLKSLGGNPM…NSRGHSRASS (101 aa). The span at 1318–1328 shows a compositional bias: polar residues; the sequence is SSNGNESNGAK. Positions 1329-1340 are enriched in basic and acidic residues; the sequence is KSSEKKSFDRRS. Serine 1340, serine 1342, and serine 1346 each carry phosphoserine. Over residues 1341 to 1351 the composition is skewed to polar residues; it reads PSNLNSTSVTP. Residue threonine 1350 is modified to Phosphothreonine. Serine 1354 bears the Phosphoserine mark. A compositionally biased stretch (polar residues) spans 1361 to 1373; it reads VPNTSYAPVQSAS. The segment covering 1377-1404 has biased composition (low complexity); that stretch reads KPTDNTSSSSNKKDTPSSNSRGHSRASS. One can recognise a C2 5 domain in the interval 1396 to 1514; it reads SRGHSRASSF…QQDGQISVKL (119 aa). Serine 1400 bears the Phosphoserine mark.

Belongs to the tricalbin family. Interacts with TCB2 via its C-terminal domain. It depends on Ca(2+) as a cofactor.

Its subcellular location is the cell membrane. The protein localises to the endoplasmic reticulum membrane. May play a role in membrane trafficking. This is Tricalbin-3 (TCB3) from Saccharomyces cerevisiae (strain ATCC 204508 / S288c) (Baker's yeast).